The primary structure comprises 289 residues: 4-hydroxybenzoate octaprenyltransferase (289 aa).

8 helical membrane passes run 21-40 (PIGT…LAAG), 95-115 (VLAL…TMNS), 116-136 (LTIA…FMKR), 138-158 (IPIP…MAYA), 161-181 (ANAL…WTIA), 213-233 (IIGV…QLMG), 236-256 (AWYY…QRLI), and 268-288 (FLNN…NYLL).

The protein belongs to the UbiA prenyltransferase family. Requires Mg(2+) as cofactor.

It localises to the cell inner membrane. It carries out the reaction all-trans-octaprenyl diphosphate + 4-hydroxybenzoate = 4-hydroxy-3-(all-trans-octaprenyl)benzoate + diphosphate. It participates in cofactor biosynthesis; ubiquinone biosynthesis. Its function is as follows. Catalyzes the prenylation of para-hydroxybenzoate (PHB) with an all-trans polyprenyl group. Mediates the second step in the final reaction sequence of ubiquinone-8 (UQ-8) biosynthesis, which is the condensation of the polyisoprenoid side chain with PHB, generating the first membrane-bound Q intermediate 3-octaprenyl-4-hydroxybenzoate. This chain is 4-hydroxybenzoate octaprenyltransferase, found in Aeromonas salmonicida (strain A449).